Consider the following 311-residue polypeptide: tRNA-cytidine(32) 2-sulfurtransferase (311 aa).

Residues 47–52 (SGGKDS) carry the PP-loop motif motif. [4Fe-4S] cluster contacts are provided by Cys-122, Cys-125, and Cys-213.

The protein belongs to the TtcA family. Homodimer. Requires Mg(2+) as cofactor. [4Fe-4S] cluster is required as a cofactor.

The protein resides in the cytoplasm. The enzyme catalyses cytidine(32) in tRNA + S-sulfanyl-L-cysteinyl-[cysteine desulfurase] + AH2 + ATP = 2-thiocytidine(32) in tRNA + L-cysteinyl-[cysteine desulfurase] + A + AMP + diphosphate + H(+). It participates in tRNA modification. Its function is as follows. Catalyzes the ATP-dependent 2-thiolation of cytidine in position 32 of tRNA, to form 2-thiocytidine (s(2)C32). The sulfur atoms are provided by the cysteine/cysteine desulfurase (IscS) system. The protein is tRNA-cytidine(32) 2-sulfurtransferase of Escherichia coli O81 (strain ED1a).